The primary structure comprises 130 residues: Small ribosomal subunit protein uS11 (130 aa).

Belongs to the universal ribosomal protein uS11 family. As to quaternary structure, part of the 30S ribosomal subunit. Interacts with proteins S7 and S18. Binds to IF-3.

Functionally, located on the platform of the 30S subunit, it bridges several disparate RNA helices of the 16S rRNA. Forms part of the Shine-Dalgarno cleft in the 70S ribosome. This chain is Small ribosomal subunit protein uS11, found in Acidiphilium cryptum (strain JF-5).